The chain runs to 732 residues: Elongation factor 2 (732 aa).

Residues 19-230 (ERIRNMGIAA…VSFKDIVELT (212 aa)) form the tr-type G domain. Residues 28-35 (AHIDHGKT), 94-98 (DTPGH), and 148-151 (NKVD) each bind GTP. H597 is subject to Diphthamide.

It belongs to the TRAFAC class translation factor GTPase superfamily. Classic translation factor GTPase family. EF-G/EF-2 subfamily.

Its subcellular location is the cytoplasm. Its function is as follows. Catalyzes the GTP-dependent ribosomal translocation step during translation elongation. During this step, the ribosome changes from the pre-translocational (PRE) to the post-translocational (POST) state as the newly formed A-site-bound peptidyl-tRNA and P-site-bound deacylated tRNA move to the P and E sites, respectively. Catalyzes the coordinated movement of the two tRNA molecules, the mRNA and conformational changes in the ribosome. This chain is Elongation factor 2, found in Thermococcus gammatolerans (strain DSM 15229 / JCM 11827 / EJ3).